The following is a 414-amino-acid chain: DNA primase large subunit PriL (414 aa).

[4Fe-4S] cluster contacts are provided by C251, C352, C370, and C376.

This sequence belongs to the eukaryotic-type primase large subunit family. Heterodimer of a small subunit (PriS) and a large subunit (PriL). It depends on [4Fe-4S] cluster as a cofactor.

Functionally, regulatory subunit of DNA primase, an RNA polymerase that catalyzes the synthesis of short RNA molecules used as primers for DNA polymerase during DNA replication. Stabilizes and modulates the activity of the small subunit, increasing the rate of DNA synthesis, and conferring RNA synthesis capability. The DNA polymerase activity may enable DNA primase to also catalyze primer extension after primer synthesis. May also play a role in DNA repair. The protein is DNA primase large subunit PriL of Methanocaldococcus jannaschii (strain ATCC 43067 / DSM 2661 / JAL-1 / JCM 10045 / NBRC 100440) (Methanococcus jannaschii).